Here is a 342-residue protein sequence, read N- to C-terminus: Putative anthocyanidin reductase (342 aa).

NADP(+) contacts are provided by residues R44, K51, 71–72, 91–93, Y172, K176, 199–202, and S214; these read EL, VAT, and PVLV. Residue K176 is the Proton donor of the active site.

It belongs to the NAD(P)-dependent epimerase/dehydratase family. Dihydroflavonol-4-reductase subfamily. As to expression, highly expressed in leaves and weakly in stems. Not expressed in roots.

Its pathway is secondary metabolite biosynthesis; flavonoid biosynthesis. The polypeptide is Putative anthocyanidin reductase (Ginkgo biloba (Ginkgo)).